A 449-amino-acid polypeptide reads, in one-letter code: Omega-amino acid--pyruvate aminotransferase (449 aa).

Substrate is bound at residue W60. Position 119 to 120 (119 to 120) interacts with pyridoxal 5'-phosphate; that stretch reads GS. An N6-(pyridoxal phosphate)lysine modification is found at K288. T327 is a binding site for pyridoxal 5'-phosphate. Substrate is bound by residues R414 and Q421.

It belongs to the class-III pyridoxal-phosphate-dependent aminotransferase family. Homotetramer. Pyridoxal 5'-phosphate is required as a cofactor.

It carries out the reaction 3-oxopropanoate + L-alanine = beta-alanine + pyruvate. Its function is as follows. Catalyzes transamination between a variety of omega-amino acids, mono and diamines, and pyruvate. Plays a pivotal role in the metabolism of the omega amino acids. The protein is Omega-amino acid--pyruvate aminotransferase of Pseudomonas putida (Arthrobacter siderocapsulatus).